The primary structure comprises 556 residues: Putative protein SPATA31F2P (556 aa).

2 disordered regions span residues 133 to 154 (ALKA…SGSD) and 210 to 231 (LPKT…WVSP). Residues 144 to 154 (SGGQDNDSGSD) are compositionally biased toward polar residues.

It belongs to the SPATA31 family.

This is Putative protein SPATA31F2P from Homo sapiens (Human).